The primary structure comprises 371 residues: Poly(rC)-binding protein 3 (371 aa).

KH domains lie at 45 to 95, 129 to 182, and 293 to 357; these read TLTI…TITG, PVTL…TISG, and ASTH…QYLI.

Its subcellular location is the cytoplasm. Single-stranded nucleic acid binding protein that binds preferentially to oligo dC. In Homo sapiens (Human), this protein is Poly(rC)-binding protein 3.